A 373-amino-acid polypeptide reads, in one-letter code: DNA replication and repair protein RecF (373 aa).

Position 30-37 (30-37) interacts with ATP; it reads GPNGQGKT.

It belongs to the RecF family.

The protein localises to the cytoplasm. Functionally, the RecF protein is involved in DNA metabolism; it is required for DNA replication and normal SOS inducibility. RecF binds preferentially to single-stranded, linear DNA. It also seems to bind ATP. The polypeptide is DNA replication and repair protein RecF (Streptomyces avermitilis (strain ATCC 31267 / DSM 46492 / JCM 5070 / NBRC 14893 / NCIMB 12804 / NRRL 8165 / MA-4680)).